The primary structure comprises 208 residues: MAHGDEPEEGEAYGEGYMAPPAHRLRAGTLLIANTNLFEPTFRRSVIFIVEHNDGGTLGVVLNRPSETAVYNVLPQWAKLAGKPKTMFVGGPVKRDAALCLATLRAGVSIDGVKGLRHVAGRMAMVDLDAEPEDIAPLVEGIRVFAGYSGWTIGQLEGEVERDDWIVLSALPSDVLTDASEDLWAKVLRRQPLPLSLLATHPIDVSRN.

This sequence belongs to the UPF0301 (AlgH) family.

The protein is UPF0301 protein MAB_4928c of Mycobacteroides abscessus (strain ATCC 19977 / DSM 44196 / CCUG 20993 / CIP 104536 / JCM 13569 / NCTC 13031 / TMC 1543 / L948) (Mycobacterium abscessus).